The following is a 292-amino-acid chain: Expansin-like protein 6 (292 aa).

A signal peptide spans 1 to 24 (MIKIIYLIVLLVLLFKNNHIIIKA). Residues 25–267 (DDCPFPQIPI…QITSNSNNIL (243 aa)) lie on the Extracellular side of the membrane. An Expansin-like EG45 domain is found at 47–150 (HASCGFEKLT…IKVPCPTYGN (104 aa)). 2 disulfide bridges follow: Cys-50-Cys-80 and Cys-83-Cys-145. N-linked (GlcNAc...) asparagine glycosylation occurs at Asn-92. Residues 268-288 (PPSLYIIFLISILFLIINNIF) traverse the membrane as a helical segment. The Cytoplasmic portion of the chain corresponds to 289 to 292 (SNKY).

Belongs to the expansin family. Expansin A subfamily.

It localises to the membrane. May serve to lubricate the movement of the cellulose microfibrils during cell growth and wall extension and/or may serve to maintain the fluid state of the slug cell wall. This is Expansin-like protein 6 (expl6) from Dictyostelium discoideum (Social amoeba).